The primary structure comprises 318 residues: NADH-ubiquinone oxidoreductase chain 1 (318 aa).

A run of 8 helical transmembrane segments spans residues 2–22 (FMIN…FLTL), 68–88 (ISMF…MWIP), 100–120 (LGVL…LWSG), 147–167 (AIIL…TLII), 172–192 (VWLI…TLAE), 217–237 (AGPF…MNIF), 253–273 (ELYT…FLWI), and 294–314 (LPLT…LSSI).

Belongs to the complex I subunit 1 family.

Its subcellular location is the mitochondrion inner membrane. The enzyme catalyses a ubiquinone + NADH + 5 H(+)(in) = a ubiquinol + NAD(+) + 4 H(+)(out). In terms of biological role, core subunit of the mitochondrial membrane respiratory chain NADH dehydrogenase (Complex I) that is believed to belong to the minimal assembly required for catalysis. Complex I functions in the transfer of electrons from NADH to the respiratory chain. The immediate electron acceptor for the enzyme is believed to be ubiquinone. The chain is NADH-ubiquinone oxidoreductase chain 1 (MT-ND1) from Ovis aries (Sheep).